A 201-amino-acid chain; its full sequence is Imidazoleglycerol-phosphate dehydratase (201 aa).

This sequence belongs to the imidazoleglycerol-phosphate dehydratase family.

The protein localises to the cytoplasm. The enzyme catalyses D-erythro-1-(imidazol-4-yl)glycerol 3-phosphate = 3-(imidazol-4-yl)-2-oxopropyl phosphate + H2O. The protein operates within amino-acid biosynthesis; L-histidine biosynthesis; L-histidine from 5-phospho-alpha-D-ribose 1-diphosphate: step 6/9. The polypeptide is Imidazoleglycerol-phosphate dehydratase (Methanopyrus kandleri (strain AV19 / DSM 6324 / JCM 9639 / NBRC 100938)).